Reading from the N-terminus, the 166-residue chain is Nucleotide-binding protein SUN_0226 (166 aa).

This sequence belongs to the YajQ family.

Nucleotide-binding protein. This Sulfurovum sp. (strain NBC37-1) protein is Nucleotide-binding protein SUN_0226.